Reading from the N-terminus, the 130-residue chain is Small ribosomal subunit protein uS11 (130 aa).

Belongs to the universal ribosomal protein uS11 family. In terms of assembly, part of the 30S ribosomal subunit. Interacts with proteins S7 and S18. Binds to IF-3.

Functionally, located on the platform of the 30S subunit, it bridges several disparate RNA helices of the 16S rRNA. Forms part of the Shine-Dalgarno cleft in the 70S ribosome. The chain is Small ribosomal subunit protein uS11 from Alteromonas mediterranea (strain DSM 17117 / CIP 110805 / LMG 28347 / Deep ecotype).